The sequence spans 535 residues: CTP synthase (535 aa).

Residues 1–268 form an amidoligase domain region; it reads MPNKYIVVTG…VSKILSRLKL (268 aa). S14 serves as a coordination point for CTP. Position 14 (S14) interacts with UTP. 15–20 contributes to the ATP binding site; it reads SVGKGT. Y55 is an L-glutamine binding site. D72 contacts ATP. The Mg(2+) site is built by D72 and E142. Residues 149–151, 189–194, and K225 each bind CTP; these read DIE and KTKPLQ. UTP-binding positions include 189–194 and K225; that span reads KTKPLQ. ATP is bound at residue V243. The Glutamine amidotransferase type-1 domain maps to 302 to 535; the sequence is YTKLKDSYIS…LGFIRAVASL (234 aa). G359 serves as a coordination point for L-glutamine. The Nucleophile; for glutamine hydrolysis role is filled by C386. Residues 387–390, E410, and R467 contribute to the L-glutamine site; that span reads FGFQ. Residues H511 and E513 contribute to the active site.

Belongs to the CTP synthase family. As to quaternary structure, homotetramer in the presence of ATP and UTP. The enzyme dissociates into homodimers in the absence of substrate nucleotides.

The catalysed reaction is UTP + L-glutamine + ATP + H2O = CTP + L-glutamate + ADP + phosphate + 2 H(+). It catalyses the reaction L-glutamine + H2O = L-glutamate + NH4(+). It carries out the reaction UTP + NH4(+) + ATP = CTP + ADP + phosphate + 2 H(+). It participates in pyrimidine metabolism; CTP biosynthesis via de novo pathway; CTP from UDP: step 2/2. Allosterically activated by GTP, when glutamine is the substrate; GTP has no effect on the reaction when ammonia is the substrate. The allosteric effector GTP functions by stabilizing the protein conformation that binds the tetrahedral intermediate(s) formed during glutamine hydrolysis. Inhibited by the product CTP, via allosteric rather than competitive inhibition. In terms of biological role, catalyzes the ATP-dependent amination of UTP to CTP with either L-glutamine or ammonia as the source of nitrogen. Regulates intracellular CTP levels through interactions with the four ribonucleotide triphosphates. In Saccharolobus solfataricus (strain ATCC 35092 / DSM 1617 / JCM 11322 / P2) (Sulfolobus solfataricus), this protein is CTP synthase.